We begin with the raw amino-acid sequence, 349 residues long: Putative inosamine-phosphate amidinotransferase 2 (349 aa).

It belongs to the amidinotransferase family.

The enzyme catalyses 1-amino-1-deoxy-scyllo-inositol 4-phosphate + L-arginine = 1-guanidino-1-deoxy-scyllo-inositol 4-phosphate + L-ornithine. Its pathway is antibiotic biosynthesis; streptomycin biosynthesis. It is not obvious if strB2 participates in streptomycin biosynthesis as an inosamine-phosphate amidinotransferase. Attempt to measure its activity have failed and the nucleophilic cysteine which is the key residue for amidine transfer is not conserved but replaced by a glycine residue. The protein is Putative inosamine-phosphate amidinotransferase 2 (strB2) of Streptomyces griseus.